Here is a 457-residue protein sequence, read N- to C-terminus: Chromosomal replication initiator protein DnaA (457 aa).

Positions 1 to 71 (MSPSIWEKCL…LLKNFCNINT (71 aa)) are domain I, interacts with DnaA modulators. The domain II stretch occupies residues 71–119 (TTPTLMLKICKPKIIQKKFFNELTLKKNILNSKLTYNVNTKLSNIIYSS). A domain III, AAA+ region region spans residues 120–337 (EINTNYTFQN…GALNKILANS (218 aa)). 4 residues coordinate ATP: glycine 165, glycine 167, lysine 168, and threonine 169. The tract at residues 338–457 (DSKKKIITIN…FLTLLKILSS (120 aa)) is domain IV, binds dsDNA.

Belongs to the DnaA family. As to quaternary structure, oligomerizes as a right-handed, spiral filament on DNA at oriC.

The protein resides in the cytoplasm. Functionally, plays an essential role in the initiation and regulation of chromosomal replication. ATP-DnaA binds to the origin of replication (oriC) to initiate formation of the DNA replication initiation complex once per cell cycle. Binds the DnaA box (a 9 base pair repeat at the origin) and separates the double-stranded (ds)DNA. Forms a right-handed helical filament on oriC DNA; dsDNA binds to the exterior of the filament while single-stranded (ss)DNA is stabiized in the filament's interior. The ATP-DnaA-oriC complex binds and stabilizes one strand of the AT-rich DNA unwinding element (DUE), permitting loading of DNA polymerase. After initiation quickly degrades to an ADP-DnaA complex that is not apt for DNA replication. Binds acidic phospholipids. In Buchnera aphidicola subsp. Baizongia pistaciae (strain Bp), this protein is Chromosomal replication initiator protein DnaA.